Reading from the N-terminus, the 254-residue chain is Probable triosephosphate isomerase 2 (254 aa).

Residue 9-11 (NMK) coordinates substrate. Histidine 96 (electrophile) is an active-site residue. Catalysis depends on glutamate 168, which acts as the Proton acceptor. Glycine 174 and serine 212 together coordinate substrate.

The protein belongs to the triosephosphate isomerase family. Homodimer.

The protein resides in the cytoplasm. It carries out the reaction D-glyceraldehyde 3-phosphate = dihydroxyacetone phosphate. The protein operates within carbohydrate biosynthesis; gluconeogenesis. It participates in carbohydrate degradation; glycolysis; D-glyceraldehyde 3-phosphate from glycerone phosphate: step 1/1. In terms of biological role, involved in the gluconeogenesis. Catalyzes stereospecifically the conversion of dihydroxyacetone phosphate (DHAP) to D-glyceraldehyde-3-phosphate (G3P). The polypeptide is Probable triosephosphate isomerase 2 (Listeria monocytogenes serotype 4b (strain F2365)).